The chain runs to 496 residues: Angiopoietin-2 (496 aa).

Residues 1–18 form the signal peptide; sequence MWQIIFLTFGWDLVLASA. Asn-89, Asn-119, Asn-133, Asn-151, Asn-240, and Asn-304 each carry an N-linked (GlcNAc...) asparagine glycan. Residues 159 to 256 are a coiled coil; it reads QLLQHSISTN…QQHDLMETVN (98 aa). Residues 275-495 form the Fibrinogen C-terminal domain; it reads KEEQTTFRDC…ATTMMIRPAD (221 aa). A disulfide bridge links Cys-284 with Cys-313. Ca(2+) is bound by residues Asp-429, Asp-431, Cys-433, and Cys-435. Cystine bridges form between Cys-433–Cys-435 and Cys-437–Cys-450.

In terms of assembly, interacts with TEK/TIE2, competing for the same binding site as ANGPT1. Interacts with ITGA5. Interacts with SVEP1/polydom. Interacts with THBD; this interaction significantly inhibits the generation of activated PC and TAFIa/CPB2 by the thrombin/thrombomodulin complex. In terms of tissue distribution, expressed in the ovary, uterus and placenta.

It is found in the secreted. Functionally, binds to TEK/TIE2, competing for the ANGPT1 binding site, and modulating ANGPT1 signaling. Can induce tyrosine phosphorylation of TEK/TIE2 in the absence of ANGPT1. In the absence of angiogenic inducers, such as VEGF, ANGPT2-mediated loosening of cell-matrix contacts may induce endothelial cell apoptosis with consequent vascular regression. In concert with VEGF, it may facilitate endothelial cell migration and proliferation, thus serving as a permissive angiogenic signal. Involved in the regulation of lymphangiogenesis. The sequence is that of Angiopoietin-2 (Angpt2) from Mus musculus (Mouse).